The chain runs to 179 residues: Replication restart protein DnaT (179 aa).

Residues Gly-156–Gly-179 form a disordered region.

It belongs to the DnaT family. In terms of assembly, homooligomerizes. Interacts with PriB. Component of the replication restart primosome. Primosome assembly occurs via a 'hand-off' mechanism. PriA binds to replication forks, subsequently PriB then DnaT bind; DnaT then displaces ssDNA to generate the helicase loading substrate.

Involved in the restart of stalled replication forks, which reloads the replicative helicase on sites other than the origin of replication. Can function in multiple replication restart pathways. Displaces ssDNA from a PriB-ssDNA complex. Probably forms a spiral filament on ssDNA. In Escherichia coli O157:H7, this protein is Replication restart protein DnaT.